Here is a 322-residue protein sequence, read N- to C-terminus: Coelomocyte uptake defective protein 15 (322 aa).

The N-terminal stretch at methionine 1–serine 20 is a signal peptide. N-linked (GlcNAc...) asparagine glycosylation is found at asparagine 62, asparagine 98, asparagine 144, asparagine 170, asparagine 180, asparagine 183, and asparagine 222. Residues leucine 244–alanine 264 traverse the membrane as a helical segment.

It belongs to the OSTM1 family.

The protein resides in the membrane. In terms of biological role, modulates the transport of substances from the endosomal to lysosomal compartments. Plays a role in lysosome formation and function in coelomocytes. This is Coelomocyte uptake defective protein 15 from Caenorhabditis elegans.